Here is a 458-residue protein sequence, read N- to C-terminus: tRNA modification GTPase MnmE (458 aa).

Residues Arg-22, Glu-85, and Arg-124 each contribute to the (6S)-5-formyl-5,6,7,8-tetrahydrofolate site. Residues 220–379 (GLATAIIGRP…LEEAISRLFF (160 aa)) enclose the TrmE-type G domain. A K(+)-binding site is contributed by Asn-230. GTP-binding positions include 230–235 (NVGKSS), 249–255 (TDIPGTT), and 274–277 (DTAG). Mg(2+) is bound at residue Ser-234. K(+) contacts are provided by Thr-249, Ile-251, and Thr-254. Thr-255 contributes to the Mg(2+) binding site. Residue Lys-458 participates in (6S)-5-formyl-5,6,7,8-tetrahydrofolate binding.

Belongs to the TRAFAC class TrmE-Era-EngA-EngB-Septin-like GTPase superfamily. TrmE GTPase family. Homodimer. Heterotetramer of two MnmE and two MnmG subunits. Requires K(+) as cofactor.

It is found in the cytoplasm. In terms of biological role, exhibits a very high intrinsic GTPase hydrolysis rate. Involved in the addition of a carboxymethylaminomethyl (cmnm) group at the wobble position (U34) of certain tRNAs, forming tRNA-cmnm(5)s(2)U34. The chain is tRNA modification GTPase MnmE from Shouchella clausii (strain KSM-K16) (Alkalihalobacillus clausii).